Consider the following 232-residue polypeptide: Purine nucleoside phosphorylase DeoD-type (232 aa).

Histidine 4 serves as a coordination point for a purine D-ribonucleoside. Phosphate is bound by residues glycine 20, arginine 24, arginine 43, and 87 to 90 (RVGS). A purine D-ribonucleoside-binding positions include glutamate 162, 178-180 (EME), and 202-203 (SD). Aspartate 203 serves as the catalytic Proton donor.

The protein belongs to the PNP/UDP phosphorylase family. In terms of assembly, homohexamer; trimer of homodimers.

It catalyses the reaction a purine D-ribonucleoside + phosphate = a purine nucleobase + alpha-D-ribose 1-phosphate. The enzyme catalyses a purine 2'-deoxy-D-ribonucleoside + phosphate = a purine nucleobase + 2-deoxy-alpha-D-ribose 1-phosphate. In terms of biological role, catalyzes the reversible phosphorolytic breakdown of the N-glycosidic bond in the beta-(deoxy)ribonucleoside molecules, with the formation of the corresponding free purine bases and pentose-1-phosphate. The polypeptide is Purine nucleoside phosphorylase DeoD-type (Bacillus velezensis (strain DSM 23117 / BGSC 10A6 / LMG 26770 / FZB42) (Bacillus amyloliquefaciens subsp. plantarum)).